A 393-amino-acid polypeptide reads, in one-letter code: Formate-dependent phosphoribosylglycinamide formyltransferase (393 aa).

N(1)-(5-phospho-beta-D-ribosyl)glycinamide contacts are provided by residues 22–23 (EL) and E82. Residues R114, K155, 160 to 165 (SSGKGQ), 195 to 198 (EGFV), and E203 contribute to the ATP site. The 190-residue stretch at 119–308 (RLAAEELGLP…EFALHARAIL (190 aa)) folds into the ATP-grasp domain. Residues E267 and E279 each contribute to the Mg(2+) site. Residues D286, K356, and 363–364 (RR) contribute to the N(1)-(5-phospho-beta-D-ribosyl)glycinamide site.

The protein belongs to the PurK/PurT family. As to quaternary structure, homodimer.

It carries out the reaction N(1)-(5-phospho-beta-D-ribosyl)glycinamide + formate + ATP = N(2)-formyl-N(1)-(5-phospho-beta-D-ribosyl)glycinamide + ADP + phosphate + H(+). The protein operates within purine metabolism; IMP biosynthesis via de novo pathway; N(2)-formyl-N(1)-(5-phospho-D-ribosyl)glycinamide from N(1)-(5-phospho-D-ribosyl)glycinamide (formate route): step 1/1. Its function is as follows. Involved in the de novo purine biosynthesis. Catalyzes the transfer of formate to 5-phospho-ribosyl-glycinamide (GAR), producing 5-phospho-ribosyl-N-formylglycinamide (FGAR). Formate is provided by PurU via hydrolysis of 10-formyl-tetrahydrofolate. This is Formate-dependent phosphoribosylglycinamide formyltransferase from Nitratidesulfovibrio vulgaris (strain DSM 19637 / Miyazaki F) (Desulfovibrio vulgaris).